The primary structure comprises 387 residues: Chaperone protein DnaJ (387 aa).

The J domain maps to 4 to 68; the sequence is DFYDVLGVSR…EKRQMYDQLG (65 aa). Residues 76-135 are disordered; the sequence is EKRGGVGGGGNSSGGSARGDPFGGMGGQGSPFGDIFEQFFGGGQGQRRQGNRPRQGQNLQ. Gly residues predominate over residues 80-105; it reads GVGGGGNSSGGSARGDPFGGMGGQGS. Low complexity predominate over residues 121 to 133; the sequence is QRRQGNRPRQGQN. Residues 148–230 form a CR-type zinc finger; the sequence is GVEKQFTVRR…CNGDGVTRQE (83 aa). Residues cysteine 161, cysteine 164, cysteine 178, cysteine 181, cysteine 204, cysteine 207, cysteine 218, and cysteine 221 each coordinate Zn(2+). CXXCXGXG motif repeat units lie at residues 161 to 168, 178 to 185, 204 to 211, and 218 to 225; these read CPDCNGRG, CPQCNGQG, CPRCDGSG, and CSTCNGDG.

This sequence belongs to the DnaJ family. As to quaternary structure, homodimer. It depends on Zn(2+) as a cofactor.

The protein resides in the cytoplasm. In terms of biological role, participates actively in the response to hyperosmotic and heat shock by preventing the aggregation of stress-denatured proteins and by disaggregating proteins, also in an autonomous, DnaK-independent fashion. Unfolded proteins bind initially to DnaJ; upon interaction with the DnaJ-bound protein, DnaK hydrolyzes its bound ATP, resulting in the formation of a stable complex. GrpE releases ADP from DnaK; ATP binding to DnaK triggers the release of the substrate protein, thus completing the reaction cycle. Several rounds of ATP-dependent interactions between DnaJ, DnaK and GrpE are required for fully efficient folding. Also involved, together with DnaK and GrpE, in the DNA replication of plasmids through activation of initiation proteins. This chain is Chaperone protein DnaJ, found in Haloquadratum walsbyi (strain DSM 16790 / HBSQ001).